We begin with the raw amino-acid sequence, 313 residues long: Acetaldehyde dehydrogenase 3 (313 aa).

Residue 13–16 (SGNI) participates in NAD(+) binding. Cysteine 133 acts as the Acyl-thioester intermediate in catalysis. NAD(+) contacts are provided by residues 164-172 (SAGPGTRAN) and asparagine 291.

The protein belongs to the acetaldehyde dehydrogenase family.

It carries out the reaction acetaldehyde + NAD(+) + CoA = acetyl-CoA + NADH + H(+). This Paraburkholderia xenovorans (strain LB400) protein is Acetaldehyde dehydrogenase 3.